The sequence spans 578 residues: Sulfite reductase [NADPH] hemoprotein beta-component (578 aa).

The segment at 1–21 (MTNTLAGPDRSRDISQPLEKL) is disordered. Positions 443, 449, 488, and 492 each coordinate [4Fe-4S] cluster. Residue C492 participates in siroheme binding.

It belongs to the nitrite and sulfite reductase 4Fe-4S domain family. Alpha(8)-beta(8). The alpha component is a flavoprotein, the beta component is a hemoprotein. Siroheme is required as a cofactor. It depends on [4Fe-4S] cluster as a cofactor.

It catalyses the reaction hydrogen sulfide + 3 NADP(+) + 3 H2O = sulfite + 3 NADPH + 4 H(+). It functions in the pathway sulfur metabolism; hydrogen sulfide biosynthesis; hydrogen sulfide from sulfite (NADPH route): step 1/1. In terms of biological role, component of the sulfite reductase complex that catalyzes the 6-electron reduction of sulfite to sulfide. This is one of several activities required for the biosynthesis of L-cysteine from sulfate. The sequence is that of Sulfite reductase [NADPH] hemoprotein beta-component from Methylocella silvestris (strain DSM 15510 / CIP 108128 / LMG 27833 / NCIMB 13906 / BL2).